A 430-amino-acid chain; its full sequence is Dihydroorotase (430 aa).

Zn(2+) contacts are provided by His-61 and His-63. Residues 63–65 and Asn-95 contribute to the substrate site; that span reads HLR. The Zn(2+) site is built by Asp-153, His-180, and His-233. Asn-279 contributes to the substrate binding site. Asp-306 is a Zn(2+) binding site. Asp-306 is an active-site residue. His-310 is a substrate binding site.

This sequence belongs to the metallo-dependent hydrolases superfamily. DHOase family. Class I DHOase subfamily. Requires Zn(2+) as cofactor.

The catalysed reaction is (S)-dihydroorotate + H2O = N-carbamoyl-L-aspartate + H(+). It functions in the pathway pyrimidine metabolism; UMP biosynthesis via de novo pathway; (S)-dihydroorotate from bicarbonate: step 3/3. Its function is as follows. Catalyzes the reversible cyclization of carbamoyl aspartate to dihydroorotate. The chain is Dihydroorotase from Caldicellulosiruptor saccharolyticus (strain ATCC 43494 / DSM 8903 / Tp8T 6331).